Reading from the N-terminus, the 183-residue chain is Secreted RxLR effector protein 41 (183 aa).

The signal sequence occupies residues methionine 1–serine 18. Positions arginine 41 to arginine 65 match the RxLR-dEER motif. Asparagine 88 carries N-linked (GlcNAc...) asparagine glycosylation.

It belongs to the RxLR effector family.

Its subcellular location is the secreted. It is found in the host nucleus. The protein resides in the host cytoplasm. Secreted effector that dos not suppress the host cell death induced by cell death-inducing proteins. The polypeptide is Secreted RxLR effector protein 41 (Plasmopara viticola (Downy mildew of grapevine)).